The chain runs to 85 residues: Phosphocarrier protein HPr (85 aa).

The HPr domain occupies methionine 1–glutamate 85. Histidine 15 serves as the catalytic Pros-phosphohistidine intermediate.

The protein localises to the cytoplasm. General (non sugar-specific) component of the phosphoenolpyruvate-dependent sugar phosphotransferase system (sugar PTS). This major carbohydrate active-transport system catalyzes the phosphorylation of incoming sugar substrates concomitantly with their translocation across the cell membrane. The phosphoryl group from phosphoenolpyruvate (PEP) is transferred to the phosphoryl carrier protein HPr by enzyme I. Phospho-HPr then transfers it to the PTS EIIA domain. The polypeptide is Phosphocarrier protein HPr (ptsH) (Klebsiella pneumoniae).